We begin with the raw amino-acid sequence, 267 residues long: REH2-associated factor 2 (267 aa).

Component of the REH2-associated complex (REH2C) composed of helicase REH2, associated factors H2F1 and H2F2, and mRNAs at various editing stages; the formation of the complex is RNA-independent. Interacts with various editing complexes including the RNA editing core (RECC) complex, the gRNA-binding (GRBC) complex (also known as the MRB1 complex) and the RNA editing mediator (REMC) complex.

The protein localises to the mitochondrion. Functionally, may play a role in mitochondrial mRNA editing by facilitating the association of the gRNA-binding (GRBC) complex with the RNA editing core (RECC) complex. However, appears to be dispensable for mRNA editing per se. This chain is REH2-associated factor 2, found in Trypanosoma brucei brucei (strain 927/4 GUTat10.1).